Here is a 422-residue protein sequence, read N- to C-terminus: Glucose-1-phosphate adenylyltransferase 2 (422 aa).

Residues tyrosine 110, glycine 175, 190–191 (EK), and serine 208 each bind alpha-D-glucose 1-phosphate.

This sequence belongs to the bacterial/plant glucose-1-phosphate adenylyltransferase family. Homotetramer.

The enzyme catalyses alpha-D-glucose 1-phosphate + ATP + H(+) = ADP-alpha-D-glucose + diphosphate. It participates in glycan biosynthesis; glycogen biosynthesis. Involved in the biosynthesis of ADP-glucose, a building block required for the elongation reactions to produce glycogen. Catalyzes the reaction between ATP and alpha-D-glucose 1-phosphate (G1P) to produce pyrophosphate and ADP-Glc. This chain is Glucose-1-phosphate adenylyltransferase 2, found in Alkalilimnicola ehrlichii (strain ATCC BAA-1101 / DSM 17681 / MLHE-1).